Reading from the N-terminus, the 367-residue chain is Eukaryotic translation initiation factor 3 subunit H (367 aa).

The region spanning 14–166 (VQVEALVVMK…LRAFRLSPNF (153 aa)) is the MPN domain.

This sequence belongs to the eIF-3 subunit H family. In terms of assembly, component of the eukaryotic translation initiation factor 3 (eIF-3) complex.

It localises to the cytoplasm. Component of the eukaryotic translation initiation factor 3 (eIF-3) complex, which is involved in protein synthesis of a specialized repertoire of mRNAs and, together with other initiation factors, stimulates binding of mRNA and methionyl-tRNAi to the 40S ribosome. The eIF-3 complex specifically targets and initiates translation of a subset of mRNAs involved in cell proliferation. The protein is Eukaryotic translation initiation factor 3 subunit H of Sclerotinia sclerotiorum (strain ATCC 18683 / 1980 / Ss-1) (White mold).